The primary structure comprises 112 residues: 2Fe-2S ferredoxin (112 aa).

A 2Fe-2S ferredoxin-type domain is found at 5–107; it reads IKVTFIINDE…GIKVRLPSAT (103 aa). Cys-42, Cys-48, Cys-51, and Cys-88 together coordinate [2Fe-2S] cluster.

The protein belongs to the adrenodoxin/putidaredoxin family. [2Fe-2S] cluster is required as a cofactor.

In terms of biological role, ferredoxin are iron-sulfur proteins that transfer electrons in a wide variety of metabolic reactions. This is 2Fe-2S ferredoxin (fdxB) from Rickettsia prowazekii (strain Madrid E).